The chain runs to 453 residues: Allantoinase (453 aa).

The Zn(2+) site is built by H59, H61, K146, H186, H242, and D315. K146 carries the N6-carboxylysine modification.

The protein belongs to the metallo-dependent hydrolases superfamily. Allantoinase family. In terms of assembly, homotetramer. Requires Zn(2+) as cofactor. Carboxylation allows a single lysine to coordinate two zinc ions.

The catalysed reaction is (S)-allantoin + H2O = allantoate + H(+). It functions in the pathway nitrogen metabolism; (S)-allantoin degradation; allantoate from (S)-allantoin: step 1/1. In terms of biological role, catalyzes the conversion of allantoin (5-ureidohydantoin) to allantoic acid by hydrolytic cleavage of the five-member hydantoin ring. This is Allantoinase from Escherichia coli (strain 55989 / EAEC).